We begin with the raw amino-acid sequence, 213 residues long: CDP-diacylglycerol--inositol 3-phosphatidyltransferase (213 aa).

At 1–5 (MPDEN) the chain is on the cytoplasmic side. The helical transmembrane segment at 6 to 26 (IFLFVPNLIGYARIVFAIISF) threads the bilayer. Residue Tyr-27 is a topological domain, lumenal. Residues 28 to 48 (FMPCCPLTASSFYLLSGLLDA) form a helical membrane-spanning segment. 2 residues coordinate Mg(2+): Asp-47 and Asp-50. The Cytoplasmic portion of the chain corresponds to 49 to 73 (FDGHAARALNQGTRFGAMLDMLTDR). Residues Gly-51, Arg-55, and Thr-61 each contribute to the a CDP-1,2-diacyl-sn-glycerol site. Residues Asp-68 and Asp-72 each coordinate Mg(2+). The active-site Proton acceptor is the Asp-72. A helical transmembrane segment spans residues 74–94 (CSTMCLLVNLALLYPGATLFF). Position 95 (Gln-95) is a topological domain, lumenal. The chain crosses the membrane as a helical span at residues 96–116 (ISMSLDVASHWLHLHSSVVRG). Residues 117–139 (SESHKMIDLSGNPVLRIYYTSRP) lie on the Cytoplasmic side of the membrane. Residues 140 to 160 (ALFTLCAGNELFYCLLYLFHF) traverse the membrane as a helical segment. At 161–174 (SEGPLVGSVGLFRM) the chain is on the lumenal side. A helical membrane pass occupies residues 175–195 (GLWVTAPIALLKSLISVIHLI). Topologically, residues 196–213 (TAARNMAALDAADRAKKK) are cytoplasmic.

The protein belongs to the CDP-alcohol phosphatidyltransferase class-I family. Mn(2+) is required as a cofactor. Mg(2+) serves as cofactor. As to expression, detected in placenta (at protein level). Widely expressed. Higher expression in adult liver and skeletal muscle, slightly lower levels seen in pancreas, kidney, lung, placenta, brain, heart, leukocyte, colon, small intestine, ovary, testis, prostate, thymus and spleen. In fetus, expressed in kidney, liver, lung and brain.

It is found in the endoplasmic reticulum membrane. Its subcellular location is the cell membrane. It carries out the reaction a CDP-1,2-diacyl-sn-glycerol + myo-inositol = a 1,2-diacyl-sn-glycero-3-phospho-(1D-myo-inositol) + CMP + H(+). Inhibited by PtdIns (product inhibition), phosphatidylinositol phosphate, and nucleoside di- and tri-phosphates. In terms of biological role, catalyzes the biosynthesis of phosphatidylinositol (PtdIns) as well as PtdIns:inositol exchange reaction. May thus act to reduce an excessive cellular PtdIns content. The exchange activity is due to the reverse reaction of PtdIns synthase and is dependent on CMP, which is tightly bound to the enzyme. The sequence is that of CDP-diacylglycerol--inositol 3-phosphatidyltransferase from Homo sapiens (Human).